A 260-amino-acid chain; its full sequence is HTH-type transcriptional repressor NanR (260 aa).

The disordered stretch occupies residues 1–22; it reads MNAFDSQAEDSPTSLGRSLRRR. An HTH gntR-type domain is found at 27 to 95; the sequence is KKLSEMVEEE…NGERARVSRP (69 aa). The H-T-H motif DNA-binding region spans 55–74; the sequence is ERELMAFFNVGRPSVREALA.

The protein belongs to the NanR family.

Transcriptional repressor that controls expression of the genes required for the catabolism of sialic acids. This Salmonella newport (strain SL254) protein is HTH-type transcriptional repressor NanR.